The following is a 2839-amino-acid chain: PDZ domain-containing protein 2 (2839 aa).

Residues 85-182 (LSFGNIPVFG…LIMLRRFKHK (98 aa)) enclose the PDZ 1 domain. The disordered stretch occupies residues 185–318 (STYNGNSSNS…RFSKGGKTDF (134 aa)). Residues 189–202 (GNSSNSSEPGETPT) show a composition bias toward low complexity. The span at 280–296 (HLERSEVDRGTEHRIPK) shows a compositional bias: basic and acidic residues. Positions 334 to 419 (KMELLKESDG…MVQLVVASKE (86 aa)) constitute a PDZ 2 domain. Polar residues predominate over residues 437-447 (TSSVEDVSSWT). The segment at 437–501 (TSSVEDVSSW…PKQGSNKIKL (65 aa)) is disordered. Residues 448–461 (DNEDQEADGEEDEG) show a composition bias toward acidic residues. Serine 568 is subject to Phosphoserine. The 87-residue stretch at 586-672 (IIGLYKEKGK…GLFVLTVRTK (87 aa)) folds into the PDZ 3 domain. Residues 678-697 (LTPCSTPTHMSRSASPNFNT) are compositionally biased toward polar residues. Residues 678–723 (LTPCSTPTHMSRSASPNFNTSGGASAGGSDEGSSSSLGRKTPGPKD) form a disordered region. Residues 728-813 (EVTLNKEPRV…GPVRLVIGRH (86 aa)) enclose the PDZ 4 domain. 2 stretches are compositionally biased toward polar residues: residues 832-843 (YQESKEANSSPG) and 894-908 (GCST…PSTS). Disordered stretches follow at residues 832 to 852 (YQES…KSPS) and 879 to 921 (DFMV…ANSL). Residues serine 944 and serine 948 each carry the phosphoserine modification. Disordered stretches follow at residues 984–1033 (SLPG…ISAP), 1062–1155 (SAEA…PCDL), 1216–1493 (KAAS…GAPA), 1530–1620 (FHED…LPTQ), 1638–1712 (PRES…SPLS), 1809–1865 (NQGT…DLSK), 1892–1976 (GKAK…SVSD), 2009–2079 (PDRG…GNIM), 2135–2166 (QVAE…SMAK), 2178–2211 (IRKA…GEDH), 2232–2251 (HFGR…DSQV), 2353–2383 (AKSG…GSLG), 2426–2481 (SRQN…SRSK), and 2516–2564 (ITPR…GEAA). Residues 1012 to 1022 (MDVHNQEERPR) are compositionally biased toward basic and acidic residues. 7 stretches are compositionally biased toward polar residues: residues 1092-1111 (RTDT…QQKS), 1138-1147 (SGSQTVNLTG), 1221-1236 (LGQQ…SDLI), 1250-1269 (SKTS…SQPA), 1305-1315 (TRSASETSTPH), 1384-1401 (SVSS…PSTD), and 1440-1453 (RSPS…GSQE). The span at 1662–1672 (SSQPSSLLEMS) shows a compositional bias: low complexity. The span at 1698–1711 (EVTSASSAMENSPL) shows a compositional bias: polar residues. The residue at position 1850 (serine 1850) is a Phosphoserine. The span at 1919 to 1931 (SPQTSHKTLSKAV) shows a compositional bias: polar residues. The segment covering 1936-1945 (HVADHEDPDR) has biased composition (basic and acidic residues). The span at 2139 to 2152 (SSTSHPSSLPSHAS) shows a compositional bias: low complexity. A compositionally biased stretch (low complexity) spans 2370-2383 (GRRSSGSIVSGSLG). Polar residues-rich tracts occupy residues 2426–2437 (SRQNPPETSSKG), 2470–2480 (RHTQPSPVSRS), and 2546–2559 (PKTS…SASD). The region spanning 2622–2706 (FIVLNRKEGS…HKDALVVIKK (85 aa)) is the PDZ 5 domain. Residues 2709-2729 (DQPRPSARQEPPTANGKGLLS) form a disordered region. The PDZ 6 domain occupies 2750-2835 (CVEVLKTSAG…GPVQLLIRKH (86 aa)).

In terms of assembly, interacts with SCN10A, CTNND2 and PKP4. In terms of processing, a secreted form is produced by caspase-mediated proteolytic cleavage. Isoform 2 is expressed (at protein level) in prostate and many prostate tumors.

The protein localises to the nucleus. It localises to the cytoplasm. Its subcellular location is the endoplasmic reticulum. It is found in the secreted. In Homo sapiens (Human), this protein is PDZ domain-containing protein 2 (PDZD2).